The following is a 287-amino-acid chain: Phosphatidylserine decarboxylase proenzyme (287 aa).

Active-site charge relay system; for autoendoproteolytic cleavage activity residues include aspartate 90, histidine 147, and serine 252. Residue serine 252 is the Schiff-base intermediate with substrate; via pyruvic acid; for decarboxylase activity of the active site. A Pyruvic acid (Ser); by autocatalysis modification is found at serine 252.

This sequence belongs to the phosphatidylserine decarboxylase family. PSD-B subfamily. Prokaryotic type I sub-subfamily. Heterodimer of a large membrane-associated beta subunit and a small pyruvoyl-containing alpha subunit. The cofactor is pyruvate. Post-translationally, is synthesized initially as an inactive proenzyme. Formation of the active enzyme involves a self-maturation process in which the active site pyruvoyl group is generated from an internal serine residue via an autocatalytic post-translational modification. Two non-identical subunits are generated from the proenzyme in this reaction, and the pyruvate is formed at the N-terminus of the alpha chain, which is derived from the carboxyl end of the proenzyme. The autoendoproteolytic cleavage occurs by a canonical serine protease mechanism, in which the side chain hydroxyl group of the serine supplies its oxygen atom to form the C-terminus of the beta chain, while the remainder of the serine residue undergoes an oxidative deamination to produce ammonia and the pyruvoyl prosthetic group on the alpha chain. During this reaction, the Ser that is part of the protease active site of the proenzyme becomes the pyruvoyl prosthetic group, which constitutes an essential element of the active site of the mature decarboxylase.

The protein resides in the cell membrane. The enzyme catalyses a 1,2-diacyl-sn-glycero-3-phospho-L-serine + H(+) = a 1,2-diacyl-sn-glycero-3-phosphoethanolamine + CO2. It participates in phospholipid metabolism; phosphatidylethanolamine biosynthesis; phosphatidylethanolamine from CDP-diacylglycerol: step 2/2. In terms of biological role, catalyzes the formation of phosphatidylethanolamine (PtdEtn) from phosphatidylserine (PtdSer). This is Phosphatidylserine decarboxylase proenzyme from Pseudomonas entomophila (strain L48).